A 194-amino-acid chain; its full sequence is Translation machinery-associated protein 22 (194 aa).

The SUI1 domain maps to 102–173 (VQIKRVERNK…DVKEWLLELY (72 aa)).

This sequence belongs to the DENR family. In terms of assembly, interacts with the 40S ribosomal subunit.

It localises to the cytoplasm. The polypeptide is Translation machinery-associated protein 22 (tma22) (Aspergillus fumigatus (strain ATCC MYA-4609 / CBS 101355 / FGSC A1100 / Af293) (Neosartorya fumigata)).